The following is a 677-amino-acid chain: MAKVNITRDLIRRQVKERGALSFERRYHVTDPFIRRLGLEAELQGHSGCVNCLEWNEKGDLLASGSDDQHTIVWDPLHHKKLLSMHTGHTANIFSVKFLPHAGDRILITGAADSKVHVHDLTVKETIHMFGDHTNRVKRIATAPMWPNTFWSAAEDGLIRQYDLRENSKHSEVLIDLTEYCGPMVEAKCLTVNPQDNNCLAVGASGPFVRLYDIRMIHNHRKSMRQSPSAGVHTFCDRQKPLPDGAAQYYVAGHLPVKLPDYNSRLRVLVATYVTFSPNGTELLVNMGGEQVYLFDLTYKQRPYTFLLPRKCHSVEVQNGKMSTNGVSNGVSNGLHLHSNGFRLPESKGCISPQVELPPYLERVKQQANEAFACQQWTQAIQLYSQAVQKAPHNAMLYGNRAAAYMKRKWDGDHYDALRDCLKAISLNPCHLKAHFRLARCLFELKYVAEALECLDDFKGKFPEQAHSSACDALGRDITAALFSKSDGEEKKAAGGGGGPVRLRSTSRKDSISEDEMVLRERSYDYQFRYCGHCNTTTDIKEANFFGSNAQYIVSGSDDGSFFIWEKETTNLVRVLQGDESIVNCLQPHPSYCFLATSGIDPVVRLWNPRPESEDLTGRVVEDMEGASQANQRRMNANPLEAMLLDMGYRITGLSSGGAGASDDEDSAEGQVQCRPS.

WD repeat units follow at residues 45 to 84, 88 to 129, 132 to 172, 182 to 222, and 265 to 305; these read GHSG…KLLS, GHTA…TIHM, DHTN…KHSE, GPMV…NHRK, and RLRV…RPYT. S352 is modified (phosphoserine). 2 TPR repeats span residues 361-394 and 396-431; these read LERV…APHN and MLYG…NPCH. Positions 489–509 are disordered; sequence EEKKAAGGGGGPVRLRSTSRK. S511 carries the post-translational modification Phosphoserine. WD repeat units follow at residues 535-575 and 578-617; these read NTTT…LVRV and GDES…EDLT. A disordered region spans residues 655-677; the sequence is SSGGAGASDDEDSAEGQVQCRPS.

It participates in protein modification; protein ubiquitination. May function as a substrate receptor for CUL4-DDB1 E3 ubiquitin-protein ligase complex. The sequence is that of WD and tetratricopeptide repeats protein 1 (Wdtc1) from Mus musculus (Mouse).